The chain runs to 228 residues: Hematopoietically-expressed homeobox protein hhex (228 aa).

The homeobox DNA-binding region spans 117–176 (RKGGQVRFSNDQTIELEKKFETQKYLSPPERKRLAKMLQLSERQVKTWFQNRRAKWRRLK). Residues 175-228 (LKQENPPSTGKREAEDSDTRRLSDAAARARELESGASTDSEELLDIEDEHQFTL) form a disordered region. The segment covering 184-207 (GKREAEDSDTRRLSDAAARARELE) has biased composition (basic and acidic residues). The span at 213 to 222 (DSEELLDIED) shows a compositional bias: acidic residues.

In terms of tissue distribution, expressed in embryonic endothelial and blood lineages. From late-blastula stage, expression is restricted to the dorsal marginal region of the extraembryonic yolk syncytial layer (YSL). By the onset of gastrulation, expressed in the entire dorsal half of the YSL. Post-gastrulation, expression appears in both anterior and posterior lateral plate mesoderm by the 3-somite stage. Posteriorly, expression is in the intermediate cell mass (ICM), which contains both endothelial and blood precursors. Subsequently expressed in the developing endothelial cells including the endocardium until the onset of circulation (24 hpf) and disappears completely by 30 hpf, at which point expression is seen in the thyroid and liver primordia. Also expressed in the developing biliary tree and pancreas.

Its subcellular location is the nucleus. Its function is as follows. Recognizes the DNA sequence 5'-ATTAA-3'. Transcriptional repressor. Regulates the differentiation of both endothelial and blood cells. Plays a role in embryonic dorsoventral patterning by regulating bmp expression. May establish anterior identity. Functions in the embryo to regulate liver development. Functions extraembryonically to generate organ chirality. The sequence is that of Hematopoietically-expressed homeobox protein hhex from Danio rerio (Zebrafish).